A 60-amino-acid chain; its full sequence is Ribosome biogenesis protein Nop10 (60 aa).

It belongs to the NOP10 family.

Its function is as follows. Involved in ribosome biogenesis; more specifically in 18S rRNA pseudouridylation and in cleavage of pre-rRNA. In Haloquadratum walsbyi (strain DSM 16790 / HBSQ001), this protein is Ribosome biogenesis protein Nop10.